Reading from the N-terminus, the 393-residue chain is Branched-chain amino acid aminotransferase 1, mitochondrial (393 aa).

Residues 1–34 constitute a mitochondrion transit peptide; that stretch reads MIHRGLWLHNLVQSYRVGSSSSSSTLFKLVYRYN. Residue arginine 138 participates in pyridoxal 5'-phosphate binding. The active-site Proton acceptor is lysine 240. N6-(pyridoxal phosphate)lysine is present on lysine 240. Residue glutamate 276 participates in pyridoxal 5'-phosphate binding.

It belongs to the class-IV pyridoxal-phosphate-dependent aminotransferase family. Requires pyridoxal 5'-phosphate as cofactor. As to expression, expressed specifically in lupulin glands.

The protein localises to the mitochondrion. The enzyme catalyses L-isoleucine + 2-oxoglutarate = (S)-3-methyl-2-oxopentanoate + L-glutamate. It catalyses the reaction L-leucine + 2-oxoglutarate = 4-methyl-2-oxopentanoate + L-glutamate. The catalysed reaction is L-valine + 2-oxoglutarate = 3-methyl-2-oxobutanoate + L-glutamate. Its pathway is amino-acid biosynthesis; L-isoleucine biosynthesis; L-isoleucine from 2-oxobutanoate: step 4/4. It functions in the pathway amino-acid biosynthesis; L-leucine biosynthesis; L-leucine from 3-methyl-2-oxobutanoate: step 4/4. The protein operates within amino-acid biosynthesis; L-valine biosynthesis; L-valine from pyruvate: step 4/4. Its function is as follows. Converts 2-oxo acids to branched-chain amino acids (BCAA). Shows no kinetic preferences corresponding to anabolic or catabolic functions, but likely involved in BCAA catabolism. In Humulus lupulus (European hop), this protein is Branched-chain amino acid aminotransferase 1, mitochondrial.